The sequence spans 609 residues: Zinc metalloproteinase-disintegrin-like (609 aa).

A signal peptide spans 1–20 (MIQVLLVTICLAALPYQGSS). Positions 21–189 (IILESGNVND…KKASQLVVTA (169 aa)) are excised as a propeptide. The Peptidase M12B domain maps to 198–393 (RFVELVLVVD…QNPECIVNEP (196 aa)). Positions 201 and 285 each coordinate Ca(2+). Cystine bridges form between C308–C388, C348–C372, and C350–C355. H333 contacts Zn(2+). Residue E334 is part of the active site. Zn(2+) is bound by residues H337 and H343. An N-linked (GlcNAc...) asparagine glycan is attached at N371. 8 residues coordinate Ca(2+): C388, N391, V403, N406, L408, E410, E413, and D416. The Disintegrin domain occupies 401 to 487 (PPVCGNELLE…ECPADVFHKN (87 aa)). Disulfide bonds link C404–C433, C415–C428, C417–C423, C427–C450, C441–C447, C446–C472, C459–C479, C466–C498, C491–C503, C510–C560, C525–C571, C538–C548, C555–C597, and C591–C602. The D/ECD-tripeptide motif lies at 465–467 (ECD). D467, P468, E470, D482, and V483 together coordinate Ca(2+).

This sequence belongs to the venom metalloproteinase (M12B) family. P-III subfamily. P-IIIa sub-subfamily. In terms of assembly, monomer. Zn(2+) serves as cofactor. Expressed by the venom gland.

The protein localises to the secreted. In terms of biological role, this protein is a zinc metalloprotease from snake venom that possesses hemorrhagic activity. This is Zinc metalloproteinase-disintegrin-like from Crotalus durissus durissus (Central American rattlesnake).